A 226-amino-acid polypeptide reads, in one-letter code: N-acetylmuramic acid 6-phosphate phosphatase (226 aa).

The active-site Nucleophile is the D12. Mg(2+) contacts are provided by D12, D14, and D171. The active-site Proton donor is D14.

Belongs to the HAD-like hydrolase superfamily. CbbY/CbbZ/Gph/YieH family. Phosphatase MupP subfamily. Requires Mg(2+) as cofactor.

It carries out the reaction N-acetyl-D-muramate 6-phosphate + H2O = N-acetyl-D-muramate + phosphate. Its pathway is cell wall biogenesis; peptidoglycan recycling. Specifically catalyzes the dephosphorylation of N-acetylmuramate 6-phosphate (MurNAc-6P) to MurNac. Is involved in peptidoglycan recycling as part of a cell wall recycling pathway that bypasses de novo biosynthesis of the peptidoglycan precursor UDP-MurNAc. Plays a role in intrinsic resistance to fosfomycin, which targets the de novo synthesis of UDP-MurNAc. In Pseudomonas aeruginosa (strain ATCC 15692 / DSM 22644 / CIP 104116 / JCM 14847 / LMG 12228 / 1C / PRS 101 / PAO1), this protein is N-acetylmuramic acid 6-phosphate phosphatase.